The primary structure comprises 422 residues: NADH-quinone oxidoreductase subunit F (422 aa).

The disordered stretch occupies residues 1 to 26; sequence MLKEEDKIFTNLHGQQSHDLKSSKKR. The span at 16–26 shows a compositional bias: basic and acidic residues; that stretch reads QSHDLKSSKKR. Position 54 to 63 (54 to 63) interacts with NAD(+); that stretch reads GRGGAGFSTG. Position 166–213 (166–213) interacts with FMN; sequence GAGAYICGEETALLESLEGKKGMPRLKPPFPAGFGLYGCPTTINNVES. The [4Fe-4S] cluster site is built by Cys-344, Cys-347, Cys-350, and Cys-390.

Belongs to the complex I 51 kDa subunit family. The cofactor is FMN. Requires [4Fe-4S] cluster as cofactor.

The enzyme catalyses a quinone + NADH + 5 H(+)(in) = a quinol + NAD(+) + 4 H(+)(out). NDH-1 shuttles electrons from NADH, via FMN and iron-sulfur (Fe-S) centers, to quinones in the respiratory chain. Couples the redox reaction to proton translocation (for every two electrons transferred, four hydrogen ions are translocated across the cytoplasmic membrane), and thus conserves the redox energy in a proton gradient. In Rickettsia felis (strain ATCC VR-1525 / URRWXCal2) (Rickettsia azadi), this protein is NADH-quinone oxidoreductase subunit F (nuoF).